The primary structure comprises 204 residues: Putative 3-methyladenine DNA glycosylase (204 aa).

Belongs to the DNA glycosylase MPG family.

This Bacillus mycoides (strain KBAB4) (Bacillus weihenstephanensis) protein is Putative 3-methyladenine DNA glycosylase.